The primary structure comprises 179 residues: Large ribosomal subunit protein uL5 (179 aa).

This sequence belongs to the universal ribosomal protein uL5 family. Part of the 50S ribosomal subunit; part of the 5S rRNA/L5/L18/L25 subcomplex. Contacts the 5S rRNA and the P site tRNA. Forms a bridge to the 30S subunit in the 70S ribosome.

Functionally, this is one of the proteins that bind and probably mediate the attachment of the 5S RNA into the large ribosomal subunit, where it forms part of the central protuberance. In the 70S ribosome it contacts protein S13 of the 30S subunit (bridge B1b), connecting the 2 subunits; this bridge is implicated in subunit movement. Contacts the P site tRNA; the 5S rRNA and some of its associated proteins might help stabilize positioning of ribosome-bound tRNAs. This Albidiferax ferrireducens (strain ATCC BAA-621 / DSM 15236 / T118) (Rhodoferax ferrireducens) protein is Large ribosomal subunit protein uL5.